The primary structure comprises 40 residues: Toxin CSTX-17 (40 aa).

Disulfide bonds link Cys2–Cys17, Cys9–Cys22, Cys16–Cys33, and Cys24–Cys31. Trp40 bears the Tryptophan amide mark.

Post-translationally, contains 4 disulfide bonds. Expressed by the venom gland.

It localises to the secreted. The sequence is that of Toxin CSTX-17 from Cupiennius salei (American wandering spider).